Consider the following 347-residue polypeptide: DNA-directed RNA polymerase subunit alpha (347 aa).

The segment at 1–226 (MLISQRPTLS…ELFGLARELN (226 aa)) is alpha N-terminal domain (alpha-NTD). Residues 243–347 (HIASFALPID…EQDYAETEQL (105 aa)) are alpha C-terminal domain (alpha-CTD).

The protein belongs to the RNA polymerase alpha chain family. As to quaternary structure, homodimer. The RNAP catalytic core consists of 2 alpha, 1 beta, 1 beta' and 1 omega subunit. When a sigma factor is associated with the core the holoenzyme is formed, which can initiate transcription.

It carries out the reaction RNA(n) + a ribonucleoside 5'-triphosphate = RNA(n+1) + diphosphate. Functionally, DNA-dependent RNA polymerase catalyzes the transcription of DNA into RNA using the four ribonucleoside triphosphates as substrates. The sequence is that of DNA-directed RNA polymerase subunit alpha from Mycobacterium bovis (strain ATCC BAA-935 / AF2122/97).